A 472-amino-acid chain; its full sequence is MKSILDGLADTTFRTITTDLLYVGSNDIQYEDIKGDMASKLGYFPQKFPLTSFRGSPFQEKMTAGDNSQLVPADQVNITEFYNKSLSSYKENEENIQCGENFMDMECFMILNPSQQLAIAVLSLTLGTFTVLENLLVLCVILHSRSLRCRPSYHFIGSLAVADLLGSVIFVYSFVDFHVFHRKDSPNVFLFKLGGVTASFTASVGSLFLTAIDRYISIHRPLAYKKIVTRPKAVVAFCLMWTIAIVIAVLPLLGWNCKKLQSVCSDIFPLIDETYLMFWIGVTSVLLLFIVYAYMYILWKAHIHAVRMIQRGTQKSIIIHTSEDGKVQVTRPDQARMDIRLAKTLVLILVVLIICWGPLLAIMVYDVFGKMNKLIKTVFAFCSMLCLLNSTVNPIIYALRSKDLRHAFRSMFPSCEGTAQPLDNSMGDSDCLHKHANNTANVHRAAENCIKNTVQIAKVTISVSTNTSAKAL.

Over 1-116 the chain is Extracellular; sequence MKSILDGLAD…CFMILNPSQQ (116 aa). The required for mitochondrial localization stretch occupies residues 2-23; sequence KSILDGLADTTFRTITTDLLYV. N-linked (GlcNAc...) asparagine glycosylation is found at Asn-77 and Asn-83. A helical membrane pass occupies residues 117-142; the sequence is LAIAVLSLTLGTFTVLENLLVLCVIL. The Cytoplasmic segment spans residues 143 to 154; the sequence is HSRSLRCRPSYH. The chain crosses the membrane as a helical span at residues 155–175; sequence FIGSLAVADLLGSVIFVYSFV. The Extracellular portion of the chain corresponds to 176-187; the sequence is DFHVFHRKDSPN. A helical membrane pass occupies residues 188-212; that stretch reads VFLFKLGGVTASFTASVGSLFLTAI. Topologically, residues 213–232 are cytoplasmic; sequence DRYISIHRPLAYKKIVTRPK. The chain crosses the membrane as a helical span at residues 233-255; it reads AVVAFCLMWTIAIVIAVLPLLGW. Topologically, residues 256–273 are extracellular; the sequence is NCKKLQSVCSDIFPLIDE. The helical transmembrane segment at 274-299 threads the bilayer; sequence TYLMFWIGVTSVLLLFIVYAYMYILW. The Cytoplasmic portion of the chain corresponds to 300–344; the sequence is KAHIHAVRMIQRGTQKSIIIHTSEDGKVQVTRPDQARMDIRLAKT. Residues 345–365 form a helical membrane-spanning segment; that stretch reads LVLILVVLIICWGPLLAIMVY. Topologically, residues 366-377 are extracellular; the sequence is DVFGKMNKLIKT. A helical transmembrane segment spans residues 378-399; it reads VFAFCSMLCLLNSTVNPIIYAL. The Cytoplasmic segment spans residues 400–472; that stretch reads RSKDLRHAFR…VSTNTSAKAL (73 aa). The S-palmitoyl cysteine moiety is linked to residue Cys-415. A phosphoserine mark is found at Ser-425 and Ser-429.

This sequence belongs to the G-protein coupled receptor 1 family. Interacts (via C-terminus) with CNRIP1; this interaction attenuates constitutive, but not agonist-dependent, inhibition of voltage-gated Ca(2+) channels in neurons. Associates with G protein alpha subunits, including G(i) alpha-1/GNAI1, G(i) alpha-3/GNAI3 and G(o)-alpha/GNAO1; palmitoylation is important for interaction with GNAI3 and GNAO1. Palmitoylation at Cys-415 is important for recruitment at plasma membrane and lipid rafts and association with G protein alpha subunits. Expressed in cerebral arterial muscle cells and cerebral cortex (at protein level).

It is found in the cell membrane. Its subcellular location is the membrane raft. It localises to the mitochondrion outer membrane. The protein resides in the cell projection. The protein localises to the axon. It is found in the presynapse. With respect to regulation, hemopressin, a peptide derived from hemoglobin subunit alpha (HBA1 and/or HBA2), acts as an antagonist peptide: hemopressin-binding efficiently blocks cannabinoid receptor CNR1 and subsequent signaling. Functionally, G-protein coupled receptor for endogenous cannabinoids (eCBs), including N-arachidonoylethanolamide (also called anandamide or AEA) and 2-arachidonoylglycerol (2-AG), as well as phytocannabinoids, such as delta(9)-tetrahydrocannabinol (THC). Mediates many cannabinoid-induced effects, acting, among others, on food intake, memory loss, gastrointestinal motility, catalepsy, ambulatory activity, anxiety, chronic pain. Signaling typically involves reduction in cyclic AMP. In the hypothalamus, may have a dual effect on mitochondrial respiration depending upon the agonist dose and possibly upon the cell type. Increases respiration at low doses, while decreases respiration at high doses. At high doses, CNR1 signal transduction involves G-protein alpha-i protein activation and subsequent inhibition of mitochondrial soluble adenylate cyclase, decrease in cyclic AMP concentration, inhibition of protein kinase A (PKA)-dependent phosphorylation of specific subunits of the mitochondrial electron transport system, including NDUFS2. In the hypothalamus, inhibits leptin-induced reactive oxygen species (ROS) formation and mediates cannabinoid-induced increase in SREBF1 and FASN gene expression. In response to cannabinoids, drives the release of orexigenic beta-endorphin, not that of melanocyte-stimulating hormone alpha/alpha-MSH, from hypothalamic POMC neurons, hence promoting food intake. In the hippocampus, regulates cellular respiration and energy production in response to cannabinoids. Involved in cannabinoid-dependent depolarization-induced suppression of inhibition (DSI), a process in which depolarization of CA1 postsynaptic pyramidal neurons mobilizes eCBs, which retrogradely activate presynaptic CB1 receptors, transiently decreasing GABAergic inhibitory neurotransmission. Also reduces excitatory synaptic transmission. In superior cervical ganglions and cerebral vascular smooth muscle cells, inhibits voltage-gated Ca(2+) channels in a constitutive, as well as agonist-dependent manner. In cerebral vascular smooth muscle cells, inhibition of voltage-gated Ca(2+) channels leads to vasodilation and decrease in vascular tone. Induces leptin production in adipocytes and reduces LRP2-mediated leptin clearance in the kidney, hence participating in hyperleptinemia. In adipose tissue, CNR1 signaling leads to increased expression of SREBF1, ACACA and FASN genes. In the liver, activation by endocannabinoids leads to increased de novo lipogenesis and reduced fatty acid catabolism, associated with increased expression of SREBF1/SREBP-1, GCK, ACACA, ACACB and FASN genes. May also affect de novo cholesterol synthesis and HDL-cholesteryl ether uptake. Peripherally modulates energy metabolism. In high carbohydrate diet-induced obesity, may decrease the expression of mitochondrial dihydrolipoyl dehydrogenase/DLD in striated muscles, as well as that of selected glucose/ pyruvate metabolic enzymes, hence affecting energy expenditure through mitochondrial metabolism. In response to cannabinoid anandamide, elicits a pro-inflammatory response in macrophages, which involves NLRP3 inflammasome activation and IL1B and IL18 secretion. In macrophages infiltrating pancreatic islets, this process may participate in the progression of type-2 diabetes and associated loss of pancreatic beta-cells. This chain is Cannabinoid receptor 1 (CNR1), found in Felis catus (Cat).